We begin with the raw amino-acid sequence, 1081 residues long: DNA primase (1081 aa).

Over residues 484 to 497 (SPNKPQSVHSTPPL) the composition is skewed to polar residues. A disordered region spans residues 484–508 (SPNKPQSVHSTPPLDQSRGDELSPG). The CHC2-type zinc-finger motif lies at 1024–1064 (CLRAKHLRSARGLARTFLSISADVHGRLCASISQQCFATKC).

Belongs to the herpesviridae DNA primase family. In terms of assembly, associates with the helicase and the primase-associated factor to form the helicase-primase factor.

It is found in the host nucleus. In terms of biological role, essential component of the helicase/primase complex. Unwinds the DNA at the replication forks and generates single-stranded DNA for both leading and lagging strand synthesis. The primase initiates primer synthesis and thereby produces large amount of short RNA primers on the lagging strand that the polymerase elongates using dNTPs. This chain is DNA primase, found in Equus caballus (Horse).